Reading from the N-terminus, the 59-residue chain is Large ribosomal subunit protein bL32c (59 aa).

The segment at Met1–Trp20 is disordered.

This sequence belongs to the bacterial ribosomal protein bL32 family.

It is found in the plastid. The protein resides in the chloroplast. The protein is Large ribosomal subunit protein bL32c of Angiopteris evecta (Mule's foot fern).